Reading from the N-terminus, the 213-residue chain is MAAPEQIAGEFENWLNERLDSLEVDREVYGAYILGVLQEEESDEEQKDALQGILSAFLEEETLEEVCQEILKQWTECCSRSGAKSNQADAEVQAIASLIEKQAQIVVKQKEVSEDAKKRKEAVLAQYANVTDDEDEAEEEEQVPVGIPSDKSLFKNTNVEDVLNRRKLQRDQAKEDAQKKKEQDKMQREKDKLSKQERKDKEKKRTQKGERKR.

Residues 119–206 adopt a coiled-coil conformation; that stretch reads RKEAVLAQYA…ERKDKEKKRT (88 aa). Residues 127-213 form a disordered region; sequence YANVTDDEDE…KRTQKGERKR (87 aa). A compositionally biased stretch (acidic residues) spans 131–142; the sequence is TDDEDEAEEEEQ. The segment covering 169–200 has biased composition (basic and acidic residues); the sequence is QRDQAKEDAQKKKEQDKMQREKDKLSKQERKD. Over residues 201–213 the composition is skewed to basic residues; sequence KEKKRTQKGERKR.

This sequence belongs to the CCDC43 family.

In Danio rerio (Zebrafish), this protein is Coiled-coil domain-containing protein 43 (ccdc43).